A 345-amino-acid polypeptide reads, in one-letter code: Prenyltransferase ltmC (345 aa).

Residue histidine 112 participates in substrate binding. Mg(2+)-binding residues include aspartate 119 and aspartate 123. Arginine 128 lines the substrate pocket. Asparagine 130 is a glycosylation site (N-linked (GlcNAc...) asparagine). Lysine 212, threonine 213, glutamine 243, asparagine 250, and lysine 260 together coordinate substrate.

This sequence belongs to the FPP/GGPP synthase family. It depends on Mg(2+) as a cofactor.

It functions in the pathway secondary metabolite biosynthesis. Its function is as follows. Prenyltransferase; part of the gene cluster that mediates the biosynthesis of lolitrems, indole-diterpene mycotoxins that are potent tremorgens in mammals, and are synthesized by clavicipitaceous fungal endophytes in association with their grass hosts. The geranylgeranyl diphosphate (GGPP) synthase ltmG is proposed to catalyze the first step in lolitrem biosynthesis. LtmG catalyzes a series of iterative condensations of isopentenyl diphosphate (IPP) with dimethylallyl diphosphate (DMAPP), geranyl diphosphate (GPP), and farnesyl diphosphate (FPP), to form GGPP. GGPP then condenses with indole-3-glycerol phosphate to form 3-geranylgeranylindole, an acyclic intermediate, to be incorporated into paxilline. Either ltmG or ltmC could be responsible for this step, as both are putative prenyl transferases. The FAD-dependent monooxygenase ltmM then catalyzes the epoxidation of the two terminal alkenes of the geranylgeranyl moiety, which is subsequently cyclized by ltmB, to paspaline. The cytochrome P450 monooxygenases ltmQ and ltmP can sequentially oxidize paspaline to terpendole E and terpendole F. Alternatively, ltmP converts paspaline to an intermediate which is oxidized by ltmQ to terpendole F. LtmF, ltmK, ltmE and ltmJ appear to be unique to the epichloe endophytes. The prenyltransferase ltmF is involved in the 27-hydroxyl-O-prenylation. The cytochrome P450 monooxygenase ltmK is required for the oxidative acetal ring formation. The multi-functional prenyltransferase ltmE is required for C20- and C21-prenylations of the indole ring of paspalanes and acts together with the cytochrome P450 monooxygenase ltmJ to yield lolitremanes by multiple oxidations and ring closures. The stereoisomer pairs of lolitriol and lolitrem N or lolitrem B and lolitrem F may be attributed to variations in the way in which ring closure can occur under the action of ltmJ. While the major product of this pathway is lolitrem B, the prenyl transferases and cytochrome P450 monooxygenases identified in this pathway have a remarkable versatility in their regio- and stereo-specificities to generate a diverse range of metabolites that are products of a metabolic grid rather than a linear pathway. This chain is Prenyltransferase ltmC, found in Epichloe festucae var. lolii (Neotyphodium lolii).